The chain runs to 23 residues: Basic phospholipase A2 CB1 (23 aa).

As to quaternary structure, heterodimer of an acidic subunit and a basic chain. The acidic subunit is non-toxic, without enzymatic activity and comprises 3 peptides that are cross-linked by 7 disulfide bridges. The basic subunit is toxic, has phospholipase A2 activity and is composed of a single chain. Ca(2+) is required as a cofactor. In terms of processing, contains 7 disulfide bonds. As to expression, expressed by the venom gland.

The protein resides in the secreted. It carries out the reaction a 1,2-diacyl-sn-glycero-3-phosphocholine + H2O = a 1-acyl-sn-glycero-3-phosphocholine + a fatty acid + H(+). Snake venom phospholipase A2 (PLA2) that shows presynaptic neurotoxicity. PLA2 catalyzes the calcium-dependent hydrolysis of the 2-acyl groups in 3-sn-phosphoglycerides. This Crotalus basiliscus (Mexican west-coast rattlesnake) protein is Basic phospholipase A2 CB1.